Reading from the N-terminus, the 699-residue chain is D-(-)-3-hydroxybutyrate oligomer hydrolase (699 aa).

The signal sequence occupies residues 1 to 19; the sequence is MNPSLCIAVAFACPLSALA. The Charge relay system role is filled by serine 303.

Belongs to the D-(-)-3-hydroxybutyrate oligomer hydrolase family.

It is found in the secreted. It catalyses the reaction (3R)-hydroxybutanoate dimer + H2O = 2 (R)-3-hydroxybutanoate + H(+). The protein operates within lipid metabolism; butanoate metabolism. Functionally, participates in the degradation of poly-3-hydroxybutyrate (PHB). It works downstream of poly(3-hydroxybutyrate) depolymerase, hydrolyzing D(-)-3-hydroxybutyrate oligomers of various length (3HB-oligomers) into 3HB-monomers. This Azoarcus sp. (strain BH72) protein is D-(-)-3-hydroxybutyrate oligomer hydrolase.